The sequence spans 326 residues: tRNA N6-adenosine threonylcarbamoyltransferase (326 aa).

Positions 113 and 117 each coordinate Fe cation. Substrate contacts are provided by residues 134–138 (VASGG), D167, G180, and N267. A Fe cation-binding site is contributed by D291.

Belongs to the KAE1 / TsaD family. Requires Fe(2+) as cofactor.

The protein resides in the cytoplasm. The enzyme catalyses L-threonylcarbamoyladenylate + adenosine(37) in tRNA = N(6)-L-threonylcarbamoyladenosine(37) in tRNA + AMP + H(+). Its function is as follows. Required for the formation of a threonylcarbamoyl group on adenosine at position 37 (t(6)A37) in tRNAs that read codons beginning with adenine. Is involved in the transfer of the threonylcarbamoyl moiety of threonylcarbamoyl-AMP (TC-AMP) to the N6 group of A37, together with TsaE and TsaB. TsaD likely plays a direct catalytic role in this reaction. This is tRNA N6-adenosine threonylcarbamoyltransferase from Thermus thermophilus (strain ATCC 27634 / DSM 579 / HB8).